The sequence spans 79 residues: UPF0154 protein SUB0399 (79 aa).

The chain crosses the membrane as a helical span at residues 4–24 (AIWILLIVLALIGGLFGGVFI).

Belongs to the UPF0154 family.

Its subcellular location is the cell membrane. The chain is UPF0154 protein SUB0399 from Streptococcus uberis (strain ATCC BAA-854 / 0140J).